The following is a 101-amino-acid chain: MAKLSSINKNEKRKKLVKQYAAKYEKLKAIANDKSLDETERLIARLKMAEIPRNANPTRVRNRCATTGRPRGYYRKFGINRIELRDLGNKGLIPGLTKSSW.

It belongs to the universal ribosomal protein uS14 family. In terms of assembly, part of the 30S ribosomal subunit. Contacts proteins S3 and S10.

Its function is as follows. Binds 16S rRNA, required for the assembly of 30S particles and may also be responsible for determining the conformation of the 16S rRNA at the A site. This Erythrobacter litoralis (strain HTCC2594) protein is Small ribosomal subunit protein uS14.